A 165-amino-acid chain; its full sequence is Cytochrome c-type biogenesis protein CcmE (165 aa).

At 1 to 7 (MTRKQKR) the chain is on the cytoplasmic side. A helical; Signal-anchor for type II membrane protein membrane pass occupies residues 8–28 (LAIIGGGMSFIVAAVLLVMFA). The Periplasmic segment spans residues 29 to 165 (FGQSIAYFYM…ASGDKTGATK (137 aa)). Heme is bound by residues His123 and Tyr127. The segment at 138–165 (DKGLWQQGAEGAAPAASAASGDKTGATK) is disordered. A compositionally biased stretch (low complexity) spans 145-158 (GAEGAAPAASAASG).

The protein belongs to the CcmE/CycJ family.

Its subcellular location is the cell inner membrane. Functionally, heme chaperone required for the biogenesis of c-type cytochromes. Transiently binds heme delivered by CcmC and transfers the heme to apo-cytochromes in a process facilitated by CcmF and CcmH. This chain is Cytochrome c-type biogenesis protein CcmE, found in Agrobacterium fabrum (strain C58 / ATCC 33970) (Agrobacterium tumefaciens (strain C58)).